The sequence spans 102 residues: Putative ribosomal protein uL13-like (102 aa).

It belongs to the universal ribosomal protein uL13 family.

The chain is Putative ribosomal protein uL13-like (RPL13AP3) from Homo sapiens (Human).